Consider the following 269-residue polypeptide: Ribosomal RNA small subunit methyltransferase A (269 aa).

6 residues coordinate S-adenosyl-L-methionine: Asn-11, Leu-13, Gly-37, Glu-57, Asp-85, and Asn-104.

The protein belongs to the class I-like SAM-binding methyltransferase superfamily. rRNA adenine N(6)-methyltransferase family. RsmA subfamily.

It is found in the cytoplasm. The catalysed reaction is adenosine(1518)/adenosine(1519) in 16S rRNA + 4 S-adenosyl-L-methionine = N(6)-dimethyladenosine(1518)/N(6)-dimethyladenosine(1519) in 16S rRNA + 4 S-adenosyl-L-homocysteine + 4 H(+). Its function is as follows. Specifically dimethylates two adjacent adenosines (A1518 and A1519) in the loop of a conserved hairpin near the 3'-end of 16S rRNA in the 30S particle. May play a critical role in biogenesis of 30S subunits. In Campylobacter hominis (strain ATCC BAA-381 / DSM 21671 / CCUG 45161 / LMG 19568 / NCTC 13146 / CH001A), this protein is Ribosomal RNA small subunit methyltransferase A.